Reading from the N-terminus, the 205-residue chain is Outer-membrane lipoprotein LolB (205 aa).

The signal sequence occupies residues 1–17 (MFLRHCITFTLIALLAG). Cysteine 18 is lipidated: N-palmitoyl cysteine. Cysteine 18 carries the S-diacylglycerol cysteine lipid modification.

Belongs to the LolB family. In terms of assembly, monomer.

The protein resides in the cell outer membrane. In terms of biological role, plays a critical role in the incorporation of lipoproteins in the outer membrane after they are released by the LolA protein. The protein is Outer-membrane lipoprotein LolB of Pseudomonas putida (strain GB-1).